The following is a 919-amino-acid chain: MLWHYKISPHLSVITDSEPTMTNAVTAETANTNHTNNASSDKTQYQPQLIEAQQQAKWATDKRFEVSNEPSDKPSRYMLSMFPYPSGKLHMGHVRNYTISDVLSRYYRLKGYEVMQPMGWDGFGLPAENAAIANQTPPAKWTFENIDSMRAQLKLLGLSIDWSREFATCSPEYYQWEQWLFLQLYKKGLVYKKLATVNWDPVDNTVLANEQVIDGKGWRSGAMVEKRDIPMYYFNITDYADELLDDLDQLEGHWPSEVITMQRNWIGRSSGMEVHFPYELAGQSNSLDVFTTRPDTLMGVTYVAVAAEHPLAQYASENNKAIADFCALCKKGSVAEADLAKAEKIGMDTGLTVTHPLTGEEVPVWVANYVLMSYGSGAVMAVPAHDERDYEFATKYNLPIKQVIDIPAGYFDDVEEGNENCAYTERNTLVNSGEFDGMDFEQAFEAMLAKLEPQELAKKKIQYRLRDWGVSRQRYWGCPIPMVNCEHCGTVPVEEQDLPVVLPTDVVPDGRGNPLKNIPEFVNTTCPKCGNPAERETDTFDTFVESSWYYARFASPHDTTNMVNKSAANKWLPVDQYIGGVEHAVMHLLYARFFHKLMRDENLVSGDEPFANLMTQGMVLAGTFYRVNADGSTTYYFTKDIDIDFNERGQPIKAILKSDGQPVTIGKIEKMSKSKNNGVDPQITIDKYGADTVRLYTLFTAPADQTLEWSDDALKGPYNFVKKVWRIASEHIQALTDANLSLESLNSDALNTDSLSKEAKALRRKTHETIGKIDSDLGKRLALNTPVSSLMELANELSNFKASSEQELQVQHEALTDLLIMLSVYAPHIGEYLLEQLGLDTVTLNYPMVDESALVQDMITMVIQVNGKMRGKMDVAPNSDPEQLKAQARAIEGVAKFLTGEIKKEIVVPNKLVNIVVAG.

The 'HIGH' region motif lies at P83 to H93. The 'KMSKS' region signature appears at K670–S674. K673 provides a ligand contact to ATP.

This sequence belongs to the class-I aminoacyl-tRNA synthetase family.

It is found in the cytoplasm. It carries out the reaction tRNA(Leu) + L-leucine + ATP = L-leucyl-tRNA(Leu) + AMP + diphosphate. This is Leucine--tRNA ligase from Psychrobacter cryohalolentis (strain ATCC BAA-1226 / DSM 17306 / VKM B-2378 / K5).